Consider the following 273-residue polypeptide: Type III pantothenate kinase (273 aa).

Residue 5 to 12 coordinates ATP; the sequence is DVGNSHVV. Position 112-115 (112-115) interacts with substrate; sequence GTDL. The Proton acceptor role is filled by Asp-114. Asp-134 is a binding site for K(+). ATP is bound at residue Thr-137. Residue Thr-189 coordinates substrate.

Belongs to the type III pantothenate kinase family. As to quaternary structure, homodimer. Requires NH4(+) as cofactor. K(+) serves as cofactor.

The protein localises to the cytoplasm. It catalyses the reaction (R)-pantothenate + ATP = (R)-4'-phosphopantothenate + ADP + H(+). It functions in the pathway cofactor biosynthesis; coenzyme A biosynthesis; CoA from (R)-pantothenate: step 1/5. In terms of biological role, catalyzes the phosphorylation of pantothenate (Pan), the first step in CoA biosynthesis. The polypeptide is Type III pantothenate kinase (Treponema pallidum subsp. pallidum (strain SS14)).